We begin with the raw amino-acid sequence, 283 residues long: Aldo-keto reductase Mmcs_1938 (283 aa).

Catalysis depends on Tyr58, which acts as the Proton donor. NADPH contacts are provided by Gly196, Leu198, Val200, Ile236, Arg238, Ser239, Ala240, Arg244, Ser247, Asn248, and Arg274.

Belongs to the aldo/keto reductase family.

The chain is Aldo-keto reductase Mmcs_1938 from Mycobacterium sp. (strain MCS).